A 466-amino-acid polypeptide reads, in one-letter code: Asparagine--tRNA ligase (466 aa).

This sequence belongs to the class-II aminoacyl-tRNA synthetase family. In terms of assembly, homodimer.

It localises to the cytoplasm. The enzyme catalyses tRNA(Asn) + L-asparagine + ATP = L-asparaginyl-tRNA(Asn) + AMP + diphosphate + H(+). The protein is Asparagine--tRNA ligase of Shewanella loihica (strain ATCC BAA-1088 / PV-4).